Reading from the N-terminus, the 463-residue chain is Phosphomannomutase (463 aa).

S103 serves as the catalytic Phosphoserine intermediate. Residues S103, D248, D250, and D252 each coordinate Mg(2+).

Belongs to the phosphohexose mutase family. Mg(2+) serves as cofactor.

It is found in the cell membrane. The catalysed reaction is alpha-D-mannose 1-phosphate = D-mannose 6-phosphate. Its pathway is nucleotide-sugar biosynthesis; GDP-alpha-D-mannose biosynthesis; alpha-D-mannose 1-phosphate from D-fructose 6-phosphate: step 2/2. The protein operates within bacterial outer membrane biogenesis; LPS O-antigen biosynthesis. Functionally, involved in GDP-mannose biosynthesis which serves as the activated sugar nucleotide precursor for mannose residues in cell surface polysaccharides. This chain is Phosphomannomutase (rfbB), found in Vibrio cholerae serotype O1 (strain ATCC 39315 / El Tor Inaba N16961).